The primary structure comprises 115 residues: Large ribosomal subunit protein bL20 (115 aa).

Belongs to the bacterial ribosomal protein bL20 family.

Binds directly to 23S ribosomal RNA and is necessary for the in vitro assembly process of the 50S ribosomal subunit. It is not involved in the protein synthesizing functions of that subunit. The protein is Large ribosomal subunit protein bL20 of Chlorobium phaeobacteroides (strain BS1).